A 555-amino-acid chain; its full sequence is Dimethylaniline monooxygenase [N-oxide-forming] 4 (555 aa).

Residues 9-13, E32, and 40-41 contribute to the FAD site; these read GAGVS and LW. NADP(+) is bound by residues 60–61 and 195–198; these read TN and SGGD. The helical transmembrane segment at 515 to 532 threads the bilayer; that stretch reads YLKVWGAPLLLASVLLIC.

This sequence belongs to the FMO family. Requires FAD as cofactor. As to expression, kidney and liver.

The protein resides in the microsome membrane. Its subcellular location is the endoplasmic reticulum membrane. The catalysed reaction is N,N-dimethylaniline + NADPH + O2 + H(+) = N,N-dimethylaniline N-oxide + NADP(+) + H2O. This protein is involved in the oxidative metabolism of a variety of xenobiotics such as drugs and pesticides. The protein is Dimethylaniline monooxygenase [N-oxide-forming] 4 (FMO4) of Oryctolagus cuniculus (Rabbit).